Consider the following 416-residue polypeptide: MFSKSVTLAQYDPDLAAAIAQEDRRQQDHVELIASENYVSCAVMEAQGSQLTNKYAEGYPAKRYYGGCEYVDIVEQLAIDRVKELFGAAYANVQPHSGSQANQAVYASVLKPGDTILGMSLAHGGHLTHGASVNISGKLYNAVTYGLDENEVLDYAEVERLALEHKPKMIVAGASAYALQIDWAKFREIADKVGAYLFVDMAHYAGLVAGGEYPNPVPFCDFVTTTTHKTLRGPRGGVILCRDNTHEKALNSSIFPSLQGGPLMHVIAAKAVAFKEALQPEFKQYAKQVKINAAVMAEELVKRGLRIVSGRTESHVFLVDLQPMKITGKAAEAALGKAHITVNKNAIPNDPEKPFVTSGIRIGSAAMTTRGFNETDARVLSNLVADVLANPEDEANLAKVRGQVTALCDKYPVYGT.

(6S)-5,6,7,8-tetrahydrofolate-binding positions include L121 and 125–127; that span reads GHL. K229 carries the N6-(pyridoxal phosphate)lysine modification.

Belongs to the SHMT family. As to quaternary structure, homodimer. Pyridoxal 5'-phosphate is required as a cofactor.

The protein localises to the cytoplasm. The catalysed reaction is (6R)-5,10-methylene-5,6,7,8-tetrahydrofolate + glycine + H2O = (6S)-5,6,7,8-tetrahydrofolate + L-serine. It participates in one-carbon metabolism; tetrahydrofolate interconversion. It functions in the pathway amino-acid biosynthesis; glycine biosynthesis; glycine from L-serine: step 1/1. Catalyzes the reversible interconversion of serine and glycine with tetrahydrofolate (THF) serving as the one-carbon carrier. This reaction serves as the major source of one-carbon groups required for the biosynthesis of purines, thymidylate, methionine, and other important biomolecules. Also exhibits THF-independent aldolase activity toward beta-hydroxyamino acids, producing glycine and aldehydes, via a retro-aldol mechanism. This Neisseria gonorrhoeae (strain ATCC 700825 / FA 1090) protein is Serine hydroxymethyltransferase.